The primary structure comprises 59 residues: MKPLLVVFVFLFLWDPVLAEMHKKCYKNGICRLECYESEMLVAYCMFQLECCVKGNPAP.

The first 19 residues, 1–19 (MKPLLVVFVFLFLWDPVLA), serve as a signal peptide directing secretion. Cystine bridges form between C25-C51, C31-C45, and C35-C52.

Belongs to the beta-defensin family.

The protein localises to the secreted. Functionally, has antibacterial activity. In Pan troglodytes (Chimpanzee), this protein is Beta-defensin 134 (DEFB134).